A 332-amino-acid polypeptide reads, in one-letter code: Geranylgeranyl pyrophosphate synthase dpasD (332 aa).

3 residues coordinate isopentenyl diphosphate: lysine 55, arginine 58, and histidine 87. 2 residues coordinate Mg(2+): aspartate 94 and aspartate 98. Arginine 103 serves as a coordination point for dimethylallyl diphosphate. Arginine 104 provides a ligand contact to isopentenyl diphosphate. Residues lysine 181, threonine 182, and glutamine 215 each contribute to the dimethylallyl diphosphate site. Aspartate 218 is a Mg(2+) binding site. Asparagine 222, lysine 232, and lysine 242 together coordinate dimethylallyl diphosphate.

It belongs to the FPP/GGPP synthase family. Mg(2+) is required as a cofactor.

It carries out the reaction isopentenyl diphosphate + dimethylallyl diphosphate = (2E)-geranyl diphosphate + diphosphate. It catalyses the reaction isopentenyl diphosphate + (2E)-geranyl diphosphate = (2E,6E)-farnesyl diphosphate + diphosphate. The catalysed reaction is isopentenyl diphosphate + (2E,6E)-farnesyl diphosphate = (2E,6E,10E)-geranylgeranyl diphosphate + diphosphate. It functions in the pathway secondary metabolite biosynthesis; terpenoid biosynthesis. In terms of biological role, geranylgeranyl pyrophosphate synthase; part of the gene cluster that mediates the biosynthesis of the diterpenoid pyrones subglutinols A and B. The first step of the pathway is the synthesis of the alpha-pyrone moiety by the polyketide synthase dpasA via condensation of one acetyl-CoA starter unit with 3 malonyl-CoA units and 2 methylations. The alpha-pyrone is then combined with geranylgeranyl pyrophosphate (GGPP) formed by the GGPP synthase dpasD through the action of the prenyltransferase dpasC to yield a linear alpha-pyrone diterpenoid. Subsequent steps in the diterpenoid pyrone biosynthetic pathway involve the decalin core formation, which is initiated by the epoxidation of the C10-C11 olefin by the FAD-dependent oxidoreductase dpasE, and is followed by a cyclization cascade catalyzed by the terpene cyclase dpasB. The FAD-linked oxidoreductase dpasF is then involved in tetrahydrofuran (THF) ring formation at the C5 unit to complete the formation of subglutinols A and B. DpasF also possesses an additional catalytic ability of multi-step oxidations to generate a new DDP analog with an enone system at the C5 named FDDP A. The sequence is that of Geranylgeranyl pyrophosphate synthase dpasD from Apiospora sacchari (Arthrinium sacchari).